Here is a 618-residue protein sequence, read N- to C-terminus: Proline--tRNA ligase (618 aa).

This sequence belongs to the class-II aminoacyl-tRNA synthetase family. ProS type 1 subfamily. Homodimer.

The protein localises to the cytoplasm. It carries out the reaction tRNA(Pro) + L-proline + ATP = L-prolyl-tRNA(Pro) + AMP + diphosphate. In terms of biological role, catalyzes the attachment of proline to tRNA(Pro) in a two-step reaction: proline is first activated by ATP to form Pro-AMP and then transferred to the acceptor end of tRNA(Pro). As ProRS can inadvertently accommodate and process non-cognate amino acids such as alanine and cysteine, to avoid such errors it has two additional distinct editing activities against alanine. One activity is designated as 'pretransfer' editing and involves the tRNA(Pro)-independent hydrolysis of activated Ala-AMP. The other activity is designated 'posttransfer' editing and involves deacylation of mischarged Ala-tRNA(Pro). The misacylated Cys-tRNA(Pro) is not edited by ProRS. The polypeptide is Proline--tRNA ligase (Streptococcus pyogenes serotype M2 (strain MGAS10270)).